A 334-amino-acid chain; its full sequence is Protein-methionine-sulfoxide reductase catalytic subunit MsrP (334 aa).

Positions 1 to 44 (MKKNQFLKESDVTAESVFFMKRRQVLKALGISAAALSLPHAAHA) form a signal peptide, tat-type signal. Residues N88, 91–92 (YE), C146, T181, N233, R238, and 249–251 (GIK) each bind Mo-molybdopterin.

It belongs to the MsrP family. As to quaternary structure, heterodimer of a catalytic subunit (MsrP) and a heme-binding subunit (MsrQ). It depends on Mo-molybdopterin as a cofactor. Predicted to be exported by the Tat system. The position of the signal peptide cleavage has not been experimentally proven.

The protein localises to the periplasm. It catalyses the reaction L-methionyl-[protein] + a quinone + H2O = L-methionyl-(S)-S-oxide-[protein] + a quinol. The catalysed reaction is L-methionyl-[protein] + a quinone + H2O = L-methionyl-(R)-S-oxide-[protein] + a quinol. Its function is as follows. Part of the MsrPQ system that repairs oxidized periplasmic proteins containing methionine sulfoxide residues (Met-O), using respiratory chain electrons. Thus protects these proteins from oxidative-stress damage caused by reactive species of oxygen and chlorine generated by the host defense mechanisms. MsrPQ is essential for the maintenance of envelope integrity under bleach stress, rescuing a wide series of structurally unrelated periplasmic proteins from methionine oxidation, including the primary periplasmic chaperone SurA and the lipoprotein Pal. The catalytic subunit MsrP is non-stereospecific, being able to reduce both (R-) and (S-) diastereoisomers of methionine sulfoxide. In Escherichia coli O127:H6 (strain E2348/69 / EPEC), this protein is Protein-methionine-sulfoxide reductase catalytic subunit MsrP.